Consider the following 191-residue polypeptide: CASP-like protein 4C3 (191 aa).

Residues 1–29 (METGDSAVKSSQDVHYYGKSTAQKHRRSN) lie on the Cytoplasmic side of the membrane. Residues 30 to 50 (GIILIFRALTFSFSLTSVIVM) form a helical membrane-spanning segment. Residues 51-72 (GTNRHRIDAQSRVAWYDFDPFR) lie on the Extracellular side of the membrane. The chain crosses the membrane as a helical span at residues 73–93 (YVLAVNAIICIYSFVEIWLAV). The Cytoplasmic portion of the chain corresponds to 94-116 (YTYLKDTLFLPETFQVWFDYGHD). A helical membrane pass occupies residues 117-137 (QGFAYLLFSANSAGIAMAQLL). Residues 138–162 (QSGNSLIHGAYRCSDAGVFCTQARA) lie on the Extracellular side of the membrane. Residues 163–183 (SIGLGFGAFLFLALSSLLTGL) form a helical membrane-spanning segment. Topologically, residues 184-191 (RVARWYFS) are cytoplasmic.

This sequence belongs to the Casparian strip membrane proteins (CASP) family. As to quaternary structure, homodimer and heterodimers.

The protein resides in the cell membrane. The chain is CASP-like protein 4C3 from Physcomitrium patens (Spreading-leaved earth moss).